The primary structure comprises 135 residues: Surface presentation of antigens protein SpaK (135 aa).

The protein belongs to the SpaK family.

Its function is as follows. Involved in a secretory pathway responsible for the surface presentation of determinants needed for the entry of Salmonella species into mammalian cells. The sequence is that of Surface presentation of antigens protein SpaK (spaK) from Salmonella typhi.